A 465-amino-acid chain; its full sequence is 28S rRNA (cytosine-C(5))-methyltransferase (465 aa).

An N-acetylglycine modification is found at Gly2. Ser167 carries the post-translational modification Phosphoserine. Residues 234–240, Asp258, Arg263, and Asp305 each bind S-adenosyl-L-methionine; that span reads CAAPGNK. Cys359 acts as the Nucleophile in catalysis. Residues 430-465 are disordered; it reads TPAPQTDAMDPEPLSQVPKRKRRRKAAVGASMQPST.

It belongs to the class I-like SAM-binding methyltransferase superfamily. RsmB/NOP family. As to expression, in the hippocampus, specifically expressed in adult hippocampal NG2-positive oligodendrocyte precursor cells (at protein level).

The protein localises to the nucleus. It localises to the nucleolus. It carries out the reaction a cytidine in 28S rRNA + S-adenosyl-L-methionine = a 5-methylcytidine in 28S rRNA + S-adenosyl-L-homocysteine + H(+). Functionally, S-adenosyl-L-methionine-dependent methyltransferase that specifically methylates the C(5) position of cytosine 3438 (m5C3438) in 28S rRNA. m5C3782 promotes protein translation without affecting ribosome biogenesis and fidelity. Required for corpus callosum and cerebral cortex development. The sequence is that of 28S rRNA (cytosine-C(5))-methyltransferase from Mus musculus (Mouse).